Here is a 132-residue protein sequence, read N- to C-terminus: Small ribosomal subunit protein uS8 (132 aa).

Belongs to the universal ribosomal protein uS8 family. In terms of assembly, part of the 30S ribosomal subunit. Contacts proteins S5 and S12.

In terms of biological role, one of the primary rRNA binding proteins, it binds directly to 16S rRNA central domain where it helps coordinate assembly of the platform of the 30S subunit. This Lactococcus lactis subsp. cremoris (strain MG1363) protein is Small ribosomal subunit protein uS8.